A 176-amino-acid polypeptide reads, in one-letter code: MFPMVTGFMNYGQQTIRAARYIGQSFMTTLSHVNRLPVTIQYPYEKLITSERFRGRIHFEFDKCIACEVCVRVCPIDLPVVDWELETNIRKKRLLNYSIDFGICIFCGNCVEYCPTNCLSMTEEYELSTYNRHELNYNQIALGRLPMSVIDDYTIRTILNSPQSLIKMGKPPLIKD.

4Fe-4S ferredoxin-type domains follow at residues 55–84 (GRIH…VDWE) and 95–124 (LNYS…MTEE). The [4Fe-4S] cluster site is built by Cys-64, Cys-67, Cys-70, Cys-74, Cys-104, Cys-107, Cys-110, and Cys-114.

This sequence belongs to the complex I 23 kDa subunit family. In terms of assembly, NDH is composed of at least 16 different subunits, 5 of which are encoded in the nucleus. [4Fe-4S] cluster is required as a cofactor.

It localises to the plastid. The protein resides in the chloroplast thylakoid membrane. The enzyme catalyses a plastoquinone + NADH + (n+1) H(+)(in) = a plastoquinol + NAD(+) + n H(+)(out). It catalyses the reaction a plastoquinone + NADPH + (n+1) H(+)(in) = a plastoquinol + NADP(+) + n H(+)(out). Its function is as follows. NDH shuttles electrons from NAD(P)H:plastoquinone, via FMN and iron-sulfur (Fe-S) centers, to quinones in the photosynthetic chain and possibly in a chloroplast respiratory chain. The immediate electron acceptor for the enzyme in this species is believed to be plastoquinone. Couples the redox reaction to proton translocation, and thus conserves the redox energy in a proton gradient. This is NAD(P)H-quinone oxidoreductase subunit I, chloroplastic from Populus alba (White poplar).